The following is a 537-amino-acid chain: Putative cysteine ligase BshC (537 aa).

The stretch at 417-457 forms a coiled coil; sequence ASEQFLNELDQLEAQQKETYERLAAEVQGNEDNKNLVEKNN.

It belongs to the BshC family.

In terms of biological role, involved in bacillithiol (BSH) biosynthesis. May catalyze the last step of the pathway, the addition of cysteine to glucosamine malate (GlcN-Mal) to generate BSH. In Staphylococcus carnosus (strain TM300), this protein is Putative cysteine ligase BshC.